Reading from the N-terminus, the 132-residue chain is Small ribosomal subunit protein uS8 (132 aa).

This sequence belongs to the universal ribosomal protein uS8 family. In terms of assembly, part of the 30S ribosomal subunit. Contacts proteins S5 and S12.

Its function is as follows. One of the primary rRNA binding proteins, it binds directly to 16S rRNA central domain where it helps coordinate assembly of the platform of the 30S subunit. The polypeptide is Small ribosomal subunit protein uS8 (Xylella fastidiosa (strain M12)).